The following is a 360-amino-acid chain: Histidinol-phosphate aminotransferase (360 aa).

At Lys-222 the chain carries N6-(pyridoxal phosphate)lysine.

This sequence belongs to the class-II pyridoxal-phosphate-dependent aminotransferase family. Histidinol-phosphate aminotransferase subfamily. As to quaternary structure, homodimer. Pyridoxal 5'-phosphate serves as cofactor.

The catalysed reaction is L-histidinol phosphate + 2-oxoglutarate = 3-(imidazol-4-yl)-2-oxopropyl phosphate + L-glutamate. It functions in the pathway amino-acid biosynthesis; L-histidine biosynthesis; L-histidine from 5-phospho-alpha-D-ribose 1-diphosphate: step 7/9. This is Histidinol-phosphate aminotransferase from Listeria innocua serovar 6a (strain ATCC BAA-680 / CLIP 11262).